The primary structure comprises 128 residues: Transcription antitermination protein NusB (128 aa).

This sequence belongs to the NusB family.

Involved in transcription antitermination. Required for transcription of ribosomal RNA (rRNA) genes. Binds specifically to the boxA antiterminator sequence of the ribosomal RNA (rrn) operons. The sequence is that of Transcription antitermination protein NusB from Listeria innocua serovar 6a (strain ATCC BAA-680 / CLIP 11262).